A 388-amino-acid polypeptide reads, in one-letter code: (S)-8-oxocitronellyl enol synthase ISY1 (388 aa).

Residues 35-37, 63-64, 81-82, 105-106, and Gln-143 each bind NADP(+); these read TGI, RR, DV, and TW. Residues Lys-147 and Tyr-178 contribute to the active site. NADP(+) is bound by residues Tyr-178, Ile-205, and 212-214; that span reads SMM.

It belongs to the short-chain dehydrogenases/reductases (SDR) family.

It carries out the reaction (S)-8-oxocitronellyl enol + NADP(+) = (6E)-8-oxogeranial + NADPH + H(+). The enzyme catalyses (S)-8-oxocitronellyl enol + NAD(+) = (6E)-8-oxogeranial + NADH + H(+). Its function is as follows. Iridoid synthase that catalyzes the first step in generation of the iridoid ring scaffold using the linear monoterpene (6E)-8-oxogeranial as substrate. Iridoids comprise a large family of distinctive bicyclic monoterpenes that possess a wide range of pharmacological activities, including anticancer, anti-inflammatory, antifungal and antibacterial activities. Catalyzes the conversion of the linear monoterpene (6E)-8-oxogeranial to (S)-8-oxocitronellyl enol, a precursor of nepetalactones, which are metabolites that are both insect-repellent and have euphoric effect in cats. This chain is (S)-8-oxocitronellyl enol synthase ISY1, found in Nepeta cataria (Catnip).